The chain runs to 1470 residues: Niemann-Pick type C1-related protein (1470 aa).

At 1–3 the chain is on the cytoplasmic side; the sequence is MFV. An intramembrane segment occupies 4-34; it reads KNFIHKLKELKQKSLDKFANLLYDYGGYVYD. A topological domain (cytoplasmic) is located at residue Arg-35. The helical transmembrane segment at 36-56 threads the bilayer; it reads PCTFIICSLICCLLLTCGFYF. Residues 57-493 are Extracellular-facing; it reads KEHEKDIYKL…DEVDRISKID (437 aa). N-linked (GlcNAc...) asparagine glycosylation is found at Asn-78, Asn-165, Asn-294, and Asn-361. The helical transmembrane segment at 494–514 threads the bilayer; it reads NLTRLLLLIGVLLIFMYALFN. The SSD domain occupies 494–653; the sequence is NLTRLLLLIG…LTFLLSFLCI (160 aa). Over 515–524 the chain is Cytoplasmic; sequence NVTSVLYRSK. The chain crosses the membrane as a helical span at residues 525 to 549; sequence PLCAVMGIFCGFLGFLSGSGFLYFL. The Extracellular segment spans residues 550-554; it reads GVKSV. Residues 555-582 traverse the membrane as a helical segment; that stretch reads PPAETVPFLVIGVGVDDVFVILNSYSLL. At 583-587 the chain is on the cytoplasmic side; that stretch reads FMVKD. Residues 588–619 form a helical membrane-spanning segment; sequence NKKRIQMCLKDSALAITVTTLTNIIAFLISAI. The Extracellular portion of the chain corresponds to 620–622; that stretch reads SPF. A helical transmembrane segment spans residues 623–659; that stretch reads YSICAFSLFTASSLFFGYLMVLTFLLSFLCIEAKLEK. Residues 660 to 663 are Cytoplasmic-facing; sequence KKRN. The stretch at 664–673 is an intramembrane region; it reads IFTGTFHLFR. The Cytoplasmic segment spans residues 674 to 1057; it reads SIFMKSSKKN…IYEEPKGNIG (384 aa). An intramembrane segment occupies 1058–1073; it reads KYFRSLVKNYYVPFLS. A topological domain (cytoplasmic) is located at residue Ser-1074. The helical transmembrane segment at 1075–1098 threads the bilayer; the sequence is RFGKTIVYIMFTIIIAMSIYGCTL. Over 1099–1300 the chain is Extracellular; the sequence is MKKGIKYDKA…NHNVQMVCFH (202 aa). N-linked (GlcNAc...) asparagine glycosylation occurs at Asn-1218. The helical transmembrane segment at 1301–1334 threads the bilayer; it reads LSSIFNETDESIIEVTLINLGITILTILVVTAYI. Residues 1335 to 1337 are Cytoplasmic-facing; that stretch reads IKG. Residues 1338–1361 traverse the membrane as a helical segment; it reads FYSCVIIALIIFLIDLCIFGFMCL. At 1362–1367 the chain is on the extracellular side; that stretch reads CGITMN. A helical membrane pass occupies residues 1368 to 1394; the sequence is IISMVILVLSVGFSIDHTSHIVQAFSH. Over 1395–1399 the chain is Cytoplasmic; sequence SMGRT. A helical membrane pass occupies residues 1400–1431; the sequence is RDEKMKESLHLMIGPVLHSGLSTWFVISTLFF. The Extracellular segment spans residues 1432–1434; that stretch reads SNK. A helical membrane pass occupies residues 1435-1466; sequence DFTVIFFQTLSLVLFFSITFSSMFLPVLLSSF. Residues 1467 to 1470 lie on the Cytoplasmic side of the membrane; it reads GPLH.

The protein belongs to the patched family.

It is found in the cell membrane. It catalyses the reaction cholesterol(in) = cholesterol(out). Functionally, facilitates cholesterol efflux from membranes in a pH-dependent manner. Required for maintaining normal parasite plasma membrane lipid composition. Required for the proper functioning of digestive vacuole. Required for the viability of blood-stage parasites. The protein is Niemann-Pick type C1-related protein of Plasmodium falciparum (isolate 3D7).